Consider the following 91-residue polypeptide: Proline, histidine and glycine-rich protein 1 (91 aa).

Residues 1-91 (MHPGGKGHCG…HCGPHPGPHH (91 aa)) form a disordered region. Gly residues-rich tracts occupy residues 33–42 (HPGHGPGHCP), 49–63 (GHGG…GHCP), and 70–82 (GHGG…GPGH).

This Mus musculus (Mouse) protein is Proline, histidine and glycine-rich protein 1 (Phgr1).